Consider the following 551-residue polypeptide: Endolytic murein transglycosylase (551 aa).

Residues 1–187 lie on the Cytoplasmic side of the membrane; the sequence is MSEKSREEEK…PKKEKKSHVK (187 aa). A disordered region spans residues 38-180; the sequence is VRTPANEPSA…EGAKPAKPKK (143 aa). Low complexity-rich tracts occupy residues 100 to 110 and 145 to 157; these read PSSPAEESGSR and QAGPETPTPATET. Residues 159-174 show a composition bias toward basic and acidic residues; it reads DIIRDTSRRSRREGAK. A helical membrane pass occupies residues 188 to 208; that stretch reads AFVISFLVFLALLSAGGYFGY. The Extracellular portion of the chain corresponds to 209 to 551; the sequence is QYVLDSLLPI…VAEHVNSKLN (343 aa).

Belongs to the transglycosylase MltG family.

Its subcellular location is the cell membrane. It catalyses the reaction a peptidoglycan chain = a peptidoglycan chain with N-acetyl-1,6-anhydromuramyl-[peptide] at the reducing end + a peptidoglycan chain with N-acetylglucosamine at the non-reducing end.. Its function is as follows. Functions as a peptidoglycan terminase that cleaves nascent peptidoglycan strands endolytically to terminate their elongation. Involved in peripheral peptidoglycan (PG) synthesis. In Streptococcus pneumoniae serotype 2 (strain D39 / NCTC 7466), this protein is Endolytic murein transglycosylase.